Consider the following 84-residue polypeptide: Small ribosomal subunit protein bS16 (84 aa).

Belongs to the bacterial ribosomal protein bS16 family.

In Acaryochloris marina (strain MBIC 11017), this protein is Small ribosomal subunit protein bS16.